The sequence spans 1166 residues: ATP-dependent helicase/deoxyribonuclease subunit B (1166 aa).

The 290-residue stretch at 1-290 (MGMRFILGRS…DTLEGNFQNR (290 aa)) folds into the UvrD-like helicase ATP-binding domain. 8–15 (GRSGTNKS) serves as a coordination point for ATP. In terms of domain architecture, UvrD-like helicase C-terminal spans 283-588 (LEGNFQNRPY…QFSHVPPSMD (306 aa)). Cys-802, Cys-1123, Cys-1126, and Cys-1132 together coordinate [4Fe-4S] cluster.

Belongs to the helicase family. AddB/RexB type 1 subfamily. As to quaternary structure, heterodimer of AddA and AddB. Mg(2+) serves as cofactor. Requires [4Fe-4S] cluster as cofactor.

Functionally, the heterodimer acts as both an ATP-dependent DNA helicase and an ATP-dependent, dual-direction single-stranded exonuclease. Recognizes the chi site generating a DNA molecule suitable for the initiation of homologous recombination. The AddB subunit has 5' -&gt; 3' nuclease activity but not helicase activity. In Oceanobacillus iheyensis (strain DSM 14371 / CIP 107618 / JCM 11309 / KCTC 3954 / HTE831), this protein is ATP-dependent helicase/deoxyribonuclease subunit B.